Here is a 444-residue protein sequence, read N- to C-terminus: DNA primase DnaG (444 aa).

Positions 173 to 250 constitute a Toprim domain; the sequence is DAILIVEGRS…YVTRAPRGLE (78 aa). The Mg(2+) site is built by Glu179, Asp221, and Asp223. A disordered region spans residues 302–354; it reads VTSSVNKTDKYSQKNESKQFKQQKNENKQVKDNSKEKTQKSTEKHNETEETHL. The span at 308–354 shows a compositional bias: basic and acidic residues; the sequence is KTDKYSQKNESKQFKQQKNENKQVKDNSKEKTQKSTEKHNETEETHL.

It belongs to the archaeal DnaG primase family. In terms of assembly, forms a ternary complex with MCM helicase and DNA. Component of the archaeal exosome complex. Mg(2+) serves as cofactor.

The enzyme catalyses ssDNA + n NTP = ssDNA/pppN(pN)n-1 hybrid + (n-1) diphosphate.. RNA polymerase that catalyzes the synthesis of short RNA molecules used as primers for DNA polymerase during DNA replication. Also part of the exosome, which is a complex involved in RNA degradation. Acts as a poly(A)-binding protein that enhances the interaction between heteromeric, adenine-rich transcripts and the exosome. This Methanosphaera stadtmanae (strain ATCC 43021 / DSM 3091 / JCM 11832 / MCB-3) protein is DNA primase DnaG.